The chain runs to 1161 residues: Type IV pilus biogenesis factor PilY1 (1161 aa).

The first 30 residues, 1–30, serve as a signal peptide directing secretion; that stretch reads MKSVLHQIGKTSLAAALSGAVLLSAQTTHA. Ca(2+) is bound by residues Asp-598, Asp-600, Asn-602, and Asp-606. Positions 617–619 are integrin-binding motif RGD; the sequence is RGD. Residues Asp-849, Asn-851, Asp-853, Val-855, and Asp-857 each coordinate Ca(2+). The disordered stretch occupies residues 1136-1161; the sequence is SGECLTVNPGPNTRGRQNWRPIEGKN.

The protein belongs to the PilY1 family. As to quaternary structure, interacts (via C-terminus) with host integrins alpha-V/beta-3 (ITGAV/ITGB3) and alpha-V/beta-5 (ITGAV/ITGB5).

It localises to the fimbrium. Its subcellular location is the membrane. It is found in the cytoplasm. The protein resides in the cytosol. Its function is as follows. Involved in pilus assembly, twitching motility and adhesion to host cells. Primes type IV pili (T4P) assembly and is required for inclusion of minor pilins PilV, PilW and PilX to the surface pili. Stabilizes assembled pilus fibers likely by antagonizing retraction mediated by PilT. Calcium-binding and calcium release by PilY1 seem to be essential for twitching motility and for regulation of pilus retraction dynamics of PilT. This chain is Type IV pilus biogenesis factor PilY1, found in Pseudomonas aeruginosa (strain ATCC 15692 / DSM 22644 / CIP 104116 / JCM 14847 / LMG 12228 / 1C / PRS 101 / PAO1).